Reading from the N-terminus, the 101-residue chain is Small ribosomal subunit protein uS14 (101 aa).

This sequence belongs to the universal ribosomal protein uS14 family. As to quaternary structure, part of the 30S ribosomal subunit. Contacts proteins S3 and S10.

Functionally, binds 16S rRNA, required for the assembly of 30S particles and may also be responsible for determining the conformation of the 16S rRNA at the A site. This is Small ribosomal subunit protein uS14 from Burkholderia vietnamiensis (strain G4 / LMG 22486) (Burkholderia cepacia (strain R1808)).